A 57-amino-acid chain; its full sequence is Light-harvesting protein B-808/866 alpha chain (57 aa).

The residue at position 1 (Met-1) is an N-formylmethionine. The Cytoplasmic portion of the chain corresponds to 1-10 (MQPRSPVRTN). A helical membrane pass occupies residues 11-30 (IVIFTILGFVVALLIHFIVL). Residue His-26 participates in a bacteriochlorophyll binding. Topologically, residues 31 to 57 (SSPEYNWLSNAEGGALLLSAARALFGI) are periplasmic.

Belongs to the antenna complex alpha subunit family. As to quaternary structure, the core complex is formed by different alpha and beta chains, binding bacteriochlorophyll molecules, and arranged most probably in tetrameric structures disposed around the reaction center. The non-pigmented gamma chains may constitute additional components.

Its subcellular location is the cell membrane. In terms of biological role, antenna complexes are light-harvesting systems, which transfer the excitation energy to the reaction centers. The chain is Light-harvesting protein B-808/866 alpha chain (puf2A) from Chloroflexus aurantiacus (strain ATCC 29366 / DSM 635 / J-10-fl).